Reading from the N-terminus, the 364-residue chain is MDEQVVKLAKETVARYRELTEELSDPAIFNDQRRYAEVAREHSRMRRGAELSERFLEALREEREARELIPAAESAEEREFFAGEAREAGRRAGELAEEIRSELIDRDPNDDKDVILEIRAGTGGDEAALFAGDLYEMYARYADRLGFRHRVLDASPAEVGGYKEIIVEIEGDGAYSVFKHEGGTHRVQRVPKTESQGRIHTSTATVAVLPEAEEVEVEINPNDLEIDVYRSSGPGGQSVNTTDSAVRITHKPTGLVVTCQNEKSQLQNKEQALRILRSRLLEREMRERQEREGQMRLAQFGSGDRSAKIRTYNFPQGRITDHRVGLTVHNLEAVLGGELEEFTKALAAKERADRLAASATGSPG.

N5-methylglutamine is present on Gln237.

The protein belongs to the prokaryotic/mitochondrial release factor family. Methylated by PrmC. Methylation increases the termination efficiency of RF1.

The protein localises to the cytoplasm. Functionally, peptide chain release factor 1 directs the termination of translation in response to the peptide chain termination codons UAG and UAA. This chain is Peptide chain release factor 1, found in Rubrobacter xylanophilus (strain DSM 9941 / JCM 11954 / NBRC 16129 / PRD-1).